The primary structure comprises 275 residues: 2,3,4,5-tetrahydropyridine-2,6-dicarboxylate N-succinyltransferase (275 aa).

The protein belongs to the transferase hexapeptide repeat family.

The protein localises to the cytoplasm. The catalysed reaction is (S)-2,3,4,5-tetrahydrodipicolinate + succinyl-CoA + H2O = (S)-2-succinylamino-6-oxoheptanedioate + CoA. It participates in amino-acid biosynthesis; L-lysine biosynthesis via DAP pathway; LL-2,6-diaminopimelate from (S)-tetrahydrodipicolinate (succinylase route): step 1/3. The chain is 2,3,4,5-tetrahydropyridine-2,6-dicarboxylate N-succinyltransferase from Paraburkholderia phytofirmans (strain DSM 17436 / LMG 22146 / PsJN) (Burkholderia phytofirmans).